Here is a 585-residue protein sequence, read N- to C-terminus: YTH domain-containing family protein 3 (585 aa).

3 disordered regions span residues 1–52, 243–277, and 304–351; these read MSAT…YPPM, RKPA…MNIG, and PQPL…QQLQ. Serine 2 bears the N-acetylserine mark. Residues 15 to 24 are compositionally biased toward polar residues; the sequence is NKVSVQNGSI. At serine 23 the chain carries Phosphoserine. A compositionally biased stretch (basic residues) spans 244 to 254; sequence KPAKPQPKLKP. The span at 329–351 shows a compositional bias: low complexity; it reads QQQQGPQPQAQPHQVQPQQQQLQ. The 135-residue stretch at 416-550 folds into the YTH domain; the sequence is GRVFIIKSYS…EKAKQVLKII (135 aa). RNA-binding positions include 422–424, aspartate 428, 438–439, asparagine 468, tryptophan 492, and tryptophan 497; these read KSY and WC.

It belongs to the YTHDF family. YTHDF3 subfamily. As to quaternary structure, interacts with CNOT1; promoting recruitment of the CCR4-NOT complex. Interacts with YTHDF1. Interacts with YTHDF2. Interacts with PAN3. In terms of processing, (Microbial infection) Proteolytically cleaved by HIV-1 protease when incorporated into HIV-1 particles in a nucleocapsid-dependent-manner. Cleavage by HIV-1 protease probably ensures optimal infectivity of the mature virion.

Its subcellular location is the cytoplasm. The protein resides in the cytosol. It is found in the P-body. It localises to the stress granule. Specifically recognizes and binds N6-methyladenosine (m6A)-containing RNAs, and regulates their stability. M6A is a modification present at internal sites of mRNAs and some non-coding RNAs and plays a role in mRNA stability and processing. Acts as a regulator of mRNA stability by promoting degradation of m6A-containing mRNAs via interaction with the CCR4-NOT complex or PAN3. The YTHDF paralogs (YTHDF1, YTHDF2 and YTHDF3) share m6A-containing mRNAs targets and act redundantly to mediate mRNA degradation and cellular differentiation. Acts as a negative regulator of type I interferon response by down-regulating interferon-stimulated genes (ISGs) expression: acts by binding to FOXO3 mRNAs. Binds to FOXO3 mRNAs independently of METTL3-mediated m6A modification. Can also act as a regulator of mRNA stability in cooperation with YTHDF2 by binding to m6A-containing mRNA and promoting their degradation. Recognizes and binds m6A-containing circular RNAs (circRNAs); circRNAs are generated through back-splicing of pre-mRNAs, a non-canonical splicing process promoted by dsRNA structures across circularizing exons. Promotes formation of phase-separated membraneless compartments, such as P-bodies or stress granules, by undergoing liquid-liquid phase separation upon binding to mRNAs containing multiple m6A-modified residues: polymethylated mRNAs act as a multivalent scaffold for the binding of YTHDF proteins, juxtaposing their disordered regions and thereby leading to phase separation. The resulting mRNA-YTHDF complexes then partition into different endogenous phase-separated membraneless compartments, such as P-bodies, stress granules or neuronal RNA granules. May also recognize and bind N1-methyladenosine (m1A)-containing mRNAs: inhibits trophoblast invasion by binding to m1A-methylated transcripts of IGF1R, promoting their degradation. Its function is as follows. Has some antiviral activity against HIV-1 virus: incorporated into HIV-1 particles in a nucleocapsid-dependent manner and reduces viral infectivity in the next cycle of infection. May interfere with this early step of the viral life cycle by binding to N6-methyladenosine (m6A) modified sites on the HIV-1 RNA genome. This chain is YTH domain-containing family protein 3, found in Homo sapiens (Human).